A 571-amino-acid polypeptide reads, in one-letter code: Proline--tRNA ligase (571 aa).

Belongs to the class-II aminoacyl-tRNA synthetase family. ProS type 1 subfamily. In terms of assembly, homodimer.

It is found in the cytoplasm. It carries out the reaction tRNA(Pro) + L-proline + ATP = L-prolyl-tRNA(Pro) + AMP + diphosphate. Catalyzes the attachment of proline to tRNA(Pro) in a two-step reaction: proline is first activated by ATP to form Pro-AMP and then transferred to the acceptor end of tRNA(Pro). As ProRS can inadvertently accommodate and process non-cognate amino acids such as alanine and cysteine, to avoid such errors it has two additional distinct editing activities against alanine. One activity is designated as 'pretransfer' editing and involves the tRNA(Pro)-independent hydrolysis of activated Ala-AMP. The other activity is designated 'posttransfer' editing and involves deacylation of mischarged Ala-tRNA(Pro). The misacylated Cys-tRNA(Pro) is not edited by ProRS. In Azotobacter vinelandii (strain DJ / ATCC BAA-1303), this protein is Proline--tRNA ligase.